A 331-amino-acid polypeptide reads, in one-letter code: Cytoskeleton protein RodZ (331 aa).

At 1 to 111 (MNTEATQDHQ…LGKRRKKRDG (111 aa)) the chain is on the cytoplasmic side. The HTH cro/C1-type domain maps to 19 to 71 (LRHAREQLGLSQQAVAERLCLKVSTVRDIEDDKAPADLASTFLRGYIRSYARL). A DNA-binding region (H-T-H motif) is located at residues 30-49 (QQAVAERLCLKVSTVRDIED). A helical; Signal-anchor for type II membrane protein transmembrane segment spans residues 112-132 (WLMSFTWLVLFVVIGLSGAWW). The Periplasmic segment spans residues 133 to 331 (WQDHKAQQEE…TLNAESSPAQ (199 aa)). Over residues 146–166 (MADQSSAELNGGDANSQNVPL) the composition is skewed to polar residues. The interval 146-238 (MADQSSAELN…ASPLPTDQAN (93 aa)) is disordered. Low complexity-rich tracts occupy residues 167–202 (DTSA…TPAD) and 216–234 (TAGT…PLPT).

This sequence belongs to the RodZ family.

The protein resides in the cell inner membrane. Its function is as follows. Cytoskeletal protein that is involved in cell-shape control through regulation of the length of the long axis. The sequence is that of Cytoskeleton protein RodZ from Klebsiella pneumoniae subsp. pneumoniae (strain ATCC 700721 / MGH 78578).